Consider the following 393-residue polypeptide: MKIISLSISIGIAIIAVLASKTLFKTHPEAFGIKAISYSFKKSLCDHHHHHHHHHHHHHRHKPSDTKRKVSICDDFPKNIPPLDTDTTSYLCVDKNGCCNFTTVQSAVDAVGNFSQRRNVIWINSGMYYEKVVIPKTKPNITLQGQGFDITAIAWNDTAYSANGTFYCATVQVFGSQFVAKNISFMNVAPIPKPGDVGAQAVAIRIAGDESAFVGCGFFGAQDTLHDDRGRHYFKDCYIQGSIDFIFGNAKSLYQDCRIISMANQLSPGSKAVNGAVTANGRSSKDENSGFSFVNCTIGGTGHVWLGRAWRPYSRVVFVSTTMTDVIAPEGWNNFNDPSRDATIFYGEYNCSGPGADMSKRAPYVQKLNETQVALLINTSFIDGDQWLQFSDL.

A signal peptide spans M1–A19. N-linked (GlcNAc...) asparagine glycans are attached at residues N100, N113, N140, N156, and N163. T165 serves as a coordination point for substrate. An N-linked (GlcNAc...) asparagine glycan is attached at N182. Q200 contacts substrate. Catalysis depends on D223, which acts as the Proton donor. D244 serves as the catalytic Nucleophile. An N-linked (GlcNAc...) asparagine glycan is attached at N295. Residue R308 participates in substrate binding. 3 N-linked (GlcNAc...) asparagine glycosylation sites follow: N350, N369, and N378.

It belongs to the pectinesterase family. In terms of tissue distribution, expressed in siliques.

The protein resides in the secreted. Its subcellular location is the cell wall. The catalysed reaction is [(1-&gt;4)-alpha-D-galacturonosyl methyl ester](n) + n H2O = [(1-&gt;4)-alpha-D-galacturonosyl](n) + n methanol + n H(+). Its pathway is glycan metabolism; pectin degradation; 2-dehydro-3-deoxy-D-gluconate from pectin: step 1/5. Acts in the modification of cell walls via demethylesterification of cell wall pectin. This chain is Probable pectinesterase 8 (PME8), found in Arabidopsis thaliana (Mouse-ear cress).